The following is a 180-amino-acid chain: Dual-action ribosomal maturation protein DarP (180 aa).

It belongs to the DarP family.

It localises to the cytoplasm. In terms of biological role, member of a network of 50S ribosomal subunit biogenesis factors which assembles along the 30S-50S interface, preventing incorrect 23S rRNA structures from forming. Promotes peptidyl transferase center (PTC) maturation. The chain is Dual-action ribosomal maturation protein DarP from Pasteurella multocida (strain Pm70).